Consider the following 340-residue polypeptide: Glycerol-3-phosphate dehydrogenase [NAD(P)+] (340 aa).

S12, W13, and K110 together coordinate NADPH. Sn-glycerol 3-phosphate-binding residues include K110, G141, and S143. NADPH is bound at residue A145. Residues K196, D249, S259, R260, and N261 each coordinate sn-glycerol 3-phosphate. The active-site Proton acceptor is K196. Position 260 (R260) interacts with NADPH. NADPH is bound by residues V284 and E286.

It belongs to the NAD-dependent glycerol-3-phosphate dehydrogenase family.

The protein resides in the cytoplasm. The enzyme catalyses sn-glycerol 3-phosphate + NAD(+) = dihydroxyacetone phosphate + NADH + H(+). It catalyses the reaction sn-glycerol 3-phosphate + NADP(+) = dihydroxyacetone phosphate + NADPH + H(+). The protein operates within membrane lipid metabolism; glycerophospholipid metabolism. In terms of biological role, catalyzes the reduction of the glycolytic intermediate dihydroxyacetone phosphate (DHAP) to sn-glycerol 3-phosphate (G3P), the key precursor for phospholipid synthesis. In Latilactobacillus sakei subsp. sakei (strain 23K) (Lactobacillus sakei subsp. sakei), this protein is Glycerol-3-phosphate dehydrogenase [NAD(P)+].